The sequence spans 552 residues: Probable acyl-activating enzyme 5, peroxisomal (552 aa).

A Microbody targeting signal motif is present at residues 550-552; the sequence is SRM.

The protein belongs to the ATP-dependent AMP-binding enzyme family. As to expression, expressed in roots, stems and developing seeds.

The protein resides in the peroxisome. May act as an acid--thiol ligase that activates carboxylic acids by forming acyl-CoAs. This Arabidopsis thaliana (Mouse-ear cress) protein is Probable acyl-activating enzyme 5, peroxisomal (AAE5).